Consider the following 214-residue polypeptide: MLGIIDYGMGNLHSVSKALERLSWSYIVSEQPEELQKADGLILPGVGSFHDAMSILNETGLTAFIKDWVDEGKPLLGICLGMQLLFEESEENKRTKGLSLLPGRVIRFPGVATDGSTYKVPHMGWNQLTFRKPNHPLLTDVEEGHVYFVHSYVVKTDADDVLLATSHYYETVPAVVGRGNILGTQFHPEKSSNVGMSILRNYGAMVEKGVKARG.

In terms of domain architecture, Glutamine amidotransferase type-1 spans 1-212 (MLGIIDYGMG…GAMVEKGVKA (212 aa)). Cys-79 (nucleophile) is an active-site residue. Residues His-187 and Glu-189 contribute to the active site.

Heterodimer of HisH and HisF.

The protein resides in the cytoplasm. The catalysed reaction is 5-[(5-phospho-1-deoxy-D-ribulos-1-ylimino)methylamino]-1-(5-phospho-beta-D-ribosyl)imidazole-4-carboxamide + L-glutamine = D-erythro-1-(imidazol-4-yl)glycerol 3-phosphate + 5-amino-1-(5-phospho-beta-D-ribosyl)imidazole-4-carboxamide + L-glutamate + H(+). It carries out the reaction L-glutamine + H2O = L-glutamate + NH4(+). It participates in amino-acid biosynthesis; L-histidine biosynthesis; L-histidine from 5-phospho-alpha-D-ribose 1-diphosphate: step 5/9. Functionally, IGPS catalyzes the conversion of PRFAR and glutamine to IGP, AICAR and glutamate. The HisH subunit catalyzes the hydrolysis of glutamine to glutamate and ammonia as part of the synthesis of IGP and AICAR. The resulting ammonia molecule is channeled to the active site of HisF. The chain is Imidazole glycerol phosphate synthase subunit HisH (hisH) from Halalkalibacterium halodurans (strain ATCC BAA-125 / DSM 18197 / FERM 7344 / JCM 9153 / C-125) (Bacillus halodurans).